Here is a 249-residue protein sequence, read N- to C-terminus: Methyl-coenzyme M reductase subunit gamma (249 aa).

The segment at Arg-43–Pro-62 is disordered. Arg-120 provides a ligand contact to coenzyme M.

The protein belongs to the methyl-coenzyme M reductase gamma subunit family. In terms of assembly, MCR is a hexamer of two alpha, two beta, and two gamma chains, forming a dimer of heterotrimers. The cofactor is coenzyme F430.

Its subcellular location is the cytoplasm. The enzyme catalyses coenzyme B + methyl-coenzyme M = methane + coenzyme M-coenzyme B heterodisulfide. Its pathway is one-carbon metabolism; methyl-coenzyme M reduction; methane from methyl-coenzyme M: step 1/1. Its function is as follows. Component of the methyl-coenzyme M reductase (MCR) I that catalyzes the reductive cleavage of methyl-coenzyme M (CoM-S-CH3 or 2-(methylthio)ethanesulfonate) using coenzyme B (CoB or 7-mercaptoheptanoylthreonine phosphate) as reductant which results in the production of methane and the mixed heterodisulfide of CoB and CoM (CoM-S-S-CoB). This is the final step in methanogenesis. This is Methyl-coenzyme M reductase subunit gamma (mcrG) from Methanothermus fervidus.